Here is a 690-residue protein sequence, read N- to C-terminus: DNA ligase (690 aa).

Residues 36-40 (DAVYD), 85-86 (SL), and Glu124 each bind NAD(+). Lys126 functions as the N6-AMP-lysine intermediate in the catalytic mechanism. NAD(+)-binding residues include Arg147, Glu184, Lys308, and Lys332. Positions 426, 429, 444, and 449 each coordinate Zn(2+). One can recognise a BRCT domain in the interval 614–690 (NQSNVFDGKS…INENELKLLL (77 aa)).

The protein belongs to the NAD-dependent DNA ligase family. LigA subfamily. It depends on Mg(2+) as a cofactor. Mn(2+) serves as cofactor.

It carries out the reaction NAD(+) + (deoxyribonucleotide)n-3'-hydroxyl + 5'-phospho-(deoxyribonucleotide)m = (deoxyribonucleotide)n+m + AMP + beta-nicotinamide D-nucleotide.. DNA ligase that catalyzes the formation of phosphodiester linkages between 5'-phosphoryl and 3'-hydroxyl groups in double-stranded DNA using NAD as a coenzyme and as the energy source for the reaction. It is essential for DNA replication and repair of damaged DNA. The sequence is that of DNA ligase from Prochlorococcus marinus (strain NATL1A).